Here is a 180-residue protein sequence, read N- to C-terminus: Probable nicotinate-nucleotide adenylyltransferase (180 aa).

This sequence belongs to the NadD family.

It catalyses the reaction nicotinate beta-D-ribonucleotide + ATP + H(+) = deamido-NAD(+) + diphosphate. It functions in the pathway cofactor biosynthesis; NAD(+) biosynthesis; deamido-NAD(+) from nicotinate D-ribonucleotide: step 1/1. Functionally, catalyzes the reversible adenylation of nicotinate mononucleotide (NaMN) to nicotinic acid adenine dinucleotide (NaAD). The polypeptide is Probable nicotinate-nucleotide adenylyltransferase (Pelagibacter ubique (strain HTCC1062)).